The chain runs to 320 residues: Cytochrome f (320 aa).

Residues 1–35 (MQTRNAFSCIKEGITRSISISVMIYIIIRAPFSNA) form the signal peptide. 4 residues coordinate heme: tyrosine 36, cysteine 56, cysteine 59, and histidine 60. Residues 286–306 (VQGLLFFLASIILAQIFLVLK) traverse the membrane as a helical segment.

Belongs to the cytochrome f family. The 4 large subunits of the cytochrome b6-f complex are cytochrome b6, subunit IV (17 kDa polypeptide, petD), cytochrome f and the Rieske protein, while the 4 small subunits are PetG, PetL, PetM and PetN. The complex functions as a dimer. Heme serves as cofactor.

The protein localises to the plastid. Its subcellular location is the chloroplast thylakoid membrane. Functionally, component of the cytochrome b6-f complex, which mediates electron transfer between photosystem II (PSII) and photosystem I (PSI), cyclic electron flow around PSI, and state transitions. This is Cytochrome f from Phaseolus vulgaris (Kidney bean).